The primary structure comprises 109 residues: NAD(P)H-quinone oxidoreductase subunit M (109 aa).

Belongs to the complex I NdhM subunit family. NDH-1 can be composed of about 15 different subunits; different subcomplexes with different compositions have been identified which probably have different functions.

Its subcellular location is the cellular thylakoid membrane. It catalyses the reaction a plastoquinone + NADH + (n+1) H(+)(in) = a plastoquinol + NAD(+) + n H(+)(out). It carries out the reaction a plastoquinone + NADPH + (n+1) H(+)(in) = a plastoquinol + NADP(+) + n H(+)(out). NDH-1 shuttles electrons from an unknown electron donor, via FMN and iron-sulfur (Fe-S) centers, to quinones in the respiratory and/or the photosynthetic chain. The immediate electron acceptor for the enzyme in this species is believed to be plastoquinone. Couples the redox reaction to proton translocation, and thus conserves the redox energy in a proton gradient. Cyanobacterial NDH-1 also plays a role in inorganic carbon-concentration. This chain is NAD(P)H-quinone oxidoreductase subunit M, found in Microcystis aeruginosa (strain NIES-843 / IAM M-2473).